The following is a 377-amino-acid chain: MTMKRAIGLMSGTSLDGIDVALIESDGESIRIVKSANGFIAPLGPTGYRGYREDEKTLLREATRDAEGIRARADRPGRLPQAEDFVTHAHAEAIEAFLAENGLSPADIDVVGFHGQTVIHRPKLGLTVQIGDGAALARRLGIRVVSDMRADDVAQGGQGAPLVPVFHKALAEAAGFAGPLGILNIGGLANATLIDSSGNMLAFDTGPGNGPINDWMKERTGRDLDEDGATAARGTVDKDLLENLLGHPLILRQPPKSLDRNWFSHRLAGYLTIEDGAATLTAFTAHAVARSLAFASERPTRWIVGGGGAKNRTLMTMLERLLKAEVLNADAIGWSSDFLEAQAFAYLALRALEGLPLTYPTTTGVSEPVTGGLVSEP.

12-19 (GTSLDGID) contributes to the ATP binding site.

Belongs to the anhydro-N-acetylmuramic acid kinase family.

It carries out the reaction 1,6-anhydro-N-acetyl-beta-muramate + ATP + H2O = N-acetyl-D-muramate 6-phosphate + ADP + H(+). It functions in the pathway amino-sugar metabolism; 1,6-anhydro-N-acetylmuramate degradation. It participates in cell wall biogenesis; peptidoglycan recycling. Catalyzes the specific phosphorylation of 1,6-anhydro-N-acetylmuramic acid (anhMurNAc) with the simultaneous cleavage of the 1,6-anhydro ring, generating MurNAc-6-P. Is required for the utilization of anhMurNAc either imported from the medium or derived from its own cell wall murein, and thus plays a role in cell wall recycling. The polypeptide is Anhydro-N-acetylmuramic acid kinase (Methylorubrum populi (strain ATCC BAA-705 / NCIMB 13946 / BJ001) (Methylobacterium populi)).